An 806-amino-acid chain; its full sequence is Leucine--tRNA ligase (806 aa).

Residues 38-48 (PYPSGEIHMGH) carry the 'HIGH' region motif. The 'KMSKS' region signature appears at 572–576 (KMSKS). Residue Lys-575 coordinates ATP.

Belongs to the class-I aminoacyl-tRNA synthetase family.

The protein resides in the cytoplasm. The enzyme catalyses tRNA(Leu) + L-leucine + ATP = L-leucyl-tRNA(Leu) + AMP + diphosphate. This chain is Leucine--tRNA ligase, found in Helicobacter pylori (strain HPAG1).